The chain runs to 791 residues: Lon protease (791 aa).

The Lon N-terminal domain maps to Leu28–Leu223. Residue Gly374 to Thr381 participates in ATP binding. The Lon proteolytic domain maps to Lys610–Val791. Catalysis depends on residues Ser697 and Lys740.

Belongs to the peptidase S16 family. As to quaternary structure, homohexamer. Organized in a ring with a central cavity.

It is found in the cytoplasm. The enzyme catalyses Hydrolysis of proteins in presence of ATP.. ATP-dependent serine protease that mediates the selective degradation of mutant and abnormal proteins as well as certain short-lived regulatory proteins. Required for cellular homeostasis and for survival from DNA damage and developmental changes induced by stress. Degrades polypeptides processively to yield small peptide fragments that are 5 to 10 amino acids long. Binds to DNA in a double-stranded, site-specific manner. This is Lon protease from Aster yellows witches'-broom phytoplasma (strain AYWB).